A 117-amino-acid polypeptide reads, in one-letter code: PBP1-interacting protein XAC1 (117 aa).

Positions 1–60 (MSKAPSQPAKKWMSARTLAKSEDATNRKSNTAAPASQPSQQPASVMHERPTPPPPAPVQL) are disordered. Residues 32–44 (AAPASQPSQQPAS) show a composition bias toward low complexity.

As to quaternary structure, forms a complex composed of at least MKT1, PBP1, XAC1 and LSM12. Forms a complex composed of at least MKT1L, PBP1, XAC1 and LSM12.

Its subcellular location is the cytoplasm. Involved in post-transcriptional regulation of gene expression. This Trypanosoma brucei brucei (strain 927/4 GUTat10.1) protein is PBP1-interacting protein XAC1.